We begin with the raw amino-acid sequence, 311 residues long: MKVTIVGAGNVGATCADVISYRGIASEVVLLDIKEGFAEGKALDITQCATNTGFNTKVSGVTNDYSKTAGSDVVVITSGIPRKPGMTREELIGINAGIVKTVAENVLKYSPNTIIVVVSNPMDTMTYLALKATGLPKNRIIGMGGALDSSRFRTYLSLALDKPANDISAMVIGGHGDTTMIPLTRLASYNGIPVSQFLSEDVLQKVAADTMVGGATLTGLLGTSAWYAPGASVAYLVDSILNDQKKMIACSVFVEGEYGQNDICIGVPCIIGKNGVEEIVNINLNDQEKALFAKSADAVRGMNDALKSILV.

Residues 7 to 12 (GAGNVG) and Asp32 contribute to the NAD(+) site. Substrate is bound by residues Arg82 and Arg88. NAD(+) is bound by residues Asn95 and 118–120 (VSN). Asn120 and Arg151 together coordinate substrate. His175 serves as the catalytic Proton acceptor.

This sequence belongs to the LDH/MDH superfamily. MDH type 3 family.

The enzyme catalyses (S)-malate + NAD(+) = oxaloacetate + NADH + H(+). Its function is as follows. Catalyzes the reversible oxidation of malate to oxaloacetate. The sequence is that of Malate dehydrogenase from Flavobacterium johnsoniae (strain ATCC 17061 / DSM 2064 / JCM 8514 / BCRC 14874 / CCUG 350202 / NBRC 14942 / NCIMB 11054 / UW101) (Cytophaga johnsonae).